A 139-amino-acid chain; its full sequence is MTKRQNRMTLVALLVIGVSLTGYLGLKAFNENLLYFFSPTDVTEGKAPKGKSFRLGGMVAKNSVKRDGVKVTFDVTDYVNTFRVNYSGILPDLFKEGQGIITTGSLINGIFIATEVLAKHDESYMPPEVADALEKAKNK.

The Cytoplasmic segment spans residues 1–7 (MTKRQNR). Residues 8-28 (MTLVALLVIGVSLTGYLGLKA) form a helical; Signal-anchor for type II membrane protein membrane-spanning segment. Topologically, residues 29–139 (FNENLLYFFS…ADALEKAKNK (111 aa)) are periplasmic. Heme is bound by residues H120 and Y124.

It belongs to the CcmE/CycJ family.

The protein resides in the cell inner membrane. Its function is as follows. Heme chaperone required for the biogenesis of c-type cytochromes. Transiently binds heme delivered by CcmC and transfers the heme to apo-cytochromes in a process facilitated by CcmF and CcmH. The polypeptide is Cytochrome c-type biogenesis protein CcmE (Ruthia magnifica subsp. Calyptogena magnifica).